Here is a 177-residue protein sequence, read N- to C-terminus: Large ribosomal subunit protein uL10 (177 aa).

Belongs to the universal ribosomal protein uL10 family. Part of the ribosomal stalk of the 50S ribosomal subunit. The N-terminus interacts with L11 and the large rRNA to form the base of the stalk. The C-terminus forms an elongated spine to which L12 dimers bind in a sequential fashion forming a multimeric L10(L12)X complex.

Its function is as follows. Forms part of the ribosomal stalk, playing a central role in the interaction of the ribosome with GTP-bound translation factors. This is Large ribosomal subunit protein uL10 from Leptospira interrogans serogroup Icterohaemorrhagiae serovar copenhageni (strain Fiocruz L1-130).